Consider the following 761-residue polypeptide: uncharacterized protein (761 aa).

The segment at 1 to 84 adopts a CR-type zinc-finger fold; sequence MIVKCPICDG…CGGSGKVVKC (84 aa). Positions 135–200 constitute an S1 motif domain; it reads GKFYKGVVTR…EKREIDFKYI (66 aa).

This is an uncharacterized protein from Methanocaldococcus jannaschii (strain ATCC 43067 / DSM 2661 / JAL-1 / JCM 10045 / NBRC 100440) (Methanococcus jannaschii).